The chain runs to 330 residues: tRNA U34 carboxymethyltransferase (330 aa).

Carboxy-S-adenosyl-L-methionine-binding positions include K91, W105, K110, G130, D152–S154, I181–E182, M196, Y200, and R315.

Belongs to the class I-like SAM-binding methyltransferase superfamily. CmoB family. In terms of assembly, homotetramer.

The enzyme catalyses carboxy-S-adenosyl-L-methionine + 5-hydroxyuridine(34) in tRNA = 5-carboxymethoxyuridine(34) in tRNA + S-adenosyl-L-homocysteine + H(+). Catalyzes carboxymethyl transfer from carboxy-S-adenosyl-L-methionine (Cx-SAM) to 5-hydroxyuridine (ho5U) to form 5-carboxymethoxyuridine (cmo5U) at position 34 in tRNAs. This Shewanella sediminis (strain HAW-EB3) protein is tRNA U34 carboxymethyltransferase.